The sequence spans 147 residues: Probable WRKY transcription factor 45 (147 aa).

Residues 21–52 form a disordered region; it reads TEFHGVDNSAQPTTSSEEKPRSKKKKKEREAR. A DNA-binding region (WRKY) is located at residues 59–124; it reads SQVDILDDGY…YQGVHTHAVD (66 aa). Positions 90, 95, 119, and 121 each coordinate Zn(2+).

Belongs to the WRKY group I family.

It is found in the nucleus. Transcription factor. Interacts specifically with the W box (5'-(T)TGAC[CT]-3'), a frequently occurring elicitor-responsive cis-acting element. This Arabidopsis thaliana (Mouse-ear cress) protein is Probable WRKY transcription factor 45 (WRKY45).